Here is a 642-residue protein sequence, read N- to C-terminus: Threonine--tRNA ligase (642 aa).

Positions 1–63 (MSEIVVTLPD…TDDCELVIVT (63 aa)) constitute a TGS domain. The catalytic stretch occupies residues 242-533 (DHRKLGQELD…LIEHFDGNFP (292 aa)). Zn(2+) contacts are provided by Cys-334, His-385, and His-510.

Belongs to the class-II aminoacyl-tRNA synthetase family. As to quaternary structure, homodimer. Zn(2+) serves as cofactor.

It localises to the cytoplasm. The catalysed reaction is tRNA(Thr) + L-threonine + ATP = L-threonyl-tRNA(Thr) + AMP + diphosphate + H(+). Functionally, catalyzes the attachment of threonine to tRNA(Thr) in a two-step reaction: L-threonine is first activated by ATP to form Thr-AMP and then transferred to the acceptor end of tRNA(Thr). This chain is Threonine--tRNA ligase, found in Natronomonas pharaonis (strain ATCC 35678 / DSM 2160 / CIP 103997 / JCM 8858 / NBRC 14720 / NCIMB 2260 / Gabara) (Halobacterium pharaonis).